A 173-amino-acid chain; its full sequence is Coordinator of PRMT5 and differentiation stimulator (173 aa).

Residue methionine 1 is modified to N-acetylmethionine. The segment at methionine 1–phenylalanine 70 is disordered. 2 positions are modified to phosphoserine: serine 64 and serine 65.

Interacts with PRMT5. Interacts with histone H4; specifically interacts with the N-terminus of histone H4 but not with histone H3. Interacts with CBFB. Found in a complex with PRMT5, RUNX1 and CBFB.

The protein resides in the nucleus. Its function is as follows. Histone-binding protein required for histone H4 methyltransferase activity of PRMT5. Specifically required for histone H4 'Arg-3' methylation mediated by PRMT5, but not histone H3 'Arg-8' methylation, suggesting that it modulates the substrate specificity of PRMT5. Specifically interacts with the N-terminus of histone H4 but not with histone H3, suggesting that it acts by promoting the association between histone H4 and PRMT5. Involved in CCNE1 promoter repression. Plays a role in muscle cell differentiation by modulating the recruitment of PRMT5 to the promoter of genes involved in the coordination between cell cycle exit and muscle differentiation. The chain is Coordinator of PRMT5 and differentiation stimulator (Coprs) from Mus musculus (Mouse).